A 158-amino-acid polypeptide reads, in one-letter code: NAD(P)H-quinone oxidoreductase subunit J, chloroplastic (158 aa).

Belongs to the complex I 30 kDa subunit family. In terms of assembly, NDH is composed of at least 16 different subunits, 5 of which are encoded in the nucleus.

It localises to the plastid. The protein localises to the chloroplast thylakoid membrane. The catalysed reaction is a plastoquinone + NADH + (n+1) H(+)(in) = a plastoquinol + NAD(+) + n H(+)(out). It catalyses the reaction a plastoquinone + NADPH + (n+1) H(+)(in) = a plastoquinol + NADP(+) + n H(+)(out). NDH shuttles electrons from NAD(P)H:plastoquinone, via FMN and iron-sulfur (Fe-S) centers, to quinones in the photosynthetic chain and possibly in a chloroplast respiratory chain. The immediate electron acceptor for the enzyme in this species is believed to be plastoquinone. Couples the redox reaction to proton translocation, and thus conserves the redox energy in a proton gradient. This chain is NAD(P)H-quinone oxidoreductase subunit J, chloroplastic, found in Psilotum nudum (Whisk fern).